A 221-amino-acid polypeptide reads, in one-letter code: Thymine/uracil-DNA glycosylase (221 aa).

A HhH domain is found at 105–133 (DYGGRVPRNRKAILDLPGVGKYTCAAVMC). Cys-197, Cys-204, Cys-207, and Cys-213 together coordinate [4Fe-4S] cluster.

The protein belongs to the Nth/MutY family. The cofactor is [4Fe-4S] cluster.

The enzyme catalyses Hydrolyzes mismatched double-stranded DNA and polynucleotides, releasing free thymine.. In terms of biological role, DNA glycosylase that excises thymine from T/G mismatches and uracil from U/G mismatches. Acts as a repair enzyme able to counteract the mutagenic effect of spontaneous hydrolytic deamination of DNA 5-methylcytosine (5-meC) residues that leads to the formation of T/G mismatches. May also repair U/G mismatches arising from hydrolytic deamination of DNA cytosine residues. G/G, A/G, T/C and U/C are minor substrates. The chain is Thymine/uracil-DNA glycosylase from Methanothermobacter thermautotrophicus (Methanobacterium thermoformicicum).